A 526-amino-acid polypeptide reads, in one-letter code: MSVRFSSNSRQYSSARSGGGGGGGGGGSSIRVSSTKSSLGGGYSSGGFSGGSFSRGSSSGGCFGGSSGGYGGFGGGSFGGGYGGGSFGGGYGGGSFGGGYGGGSFGGGYGGGSFGGGSFGGGSFGGGSFGGGLGGDGGGLLSGNEKVTMQNLNDRLASYMNKVRDLEESNYELEGKIKEWYEKHGNSSQREPRDYSKYYKTIEDLKGQIVNLTTDNANVLLQIDNARLAADDFRLKYENEVALRQSVEADINGLRRVLDELTLSKADLEMQIESLTEELAYLKKNHEEEMKDLQNVSTGDVNVEMNAAPGVDLTQLLNNMRNQYEQLAEKNRKDAEAWFNEKSKELTTEIDSNIEQMSSHKSEITELRRTVQGLEIELQSQLALKQSLEASLAETEGRYCVQLSQIQSQISALEEQLQQIRAETECQNAEYQQLLDIKTRLENEIQTYRSLLEGEGGYVGNLQITLNCFPSEFHLAKLTQTQGKTRGWKGSNTNKTRVIKTIIEEVTPEGRVLSSMIESETKKHFY.

A compositionally biased stretch (low complexity) spans 1-16 (MSVRFSSNSRQYSSAR). The segment at 1–40 (MSVRFSSNSRQYSSARSGGGGGGGGGGSSIRVSSTKSSLG) is disordered. The interval 1–144 (MSVRFSSNSR…GDGGGLLSGN (144 aa)) is head. 5 positions are modified to phosphoserine: Ser-17, Ser-38, Ser-49, Ser-52, and Ser-169. Positions 17-28 (SGGGGGGGGGGS) are enriched in gly residues. The coil 1A stretch occupies residues 145-180 (EKVTMQNLNDRLASYMNKVRDLEESNYELEGKIKEW). Positions 145–459 (EKVTMQNLND…SLLEGEGGYV (315 aa)) constitute an IF rod domain. Residues 181-201 (YEKHGNSSQREPRDYSKYYKT) form a linker 1 region. The tract at residues 202–293 (IEDLKGQIVN…KNHEEEMKDL (92 aa)) is coil 1B. The linker 12 stretch occupies residues 294–316 (QNVSTGDVNVEMNAAPGVDLTQL). The tract at residues 317–455 (LNNMRNQYEQ…QTYRSLLEGE (139 aa)) is coil 2. The interval 456–526 (GGYVGNLQIT…IESETKKHFY (71 aa)) is tail.

The protein belongs to the intermediate filament family. In terms of assembly, heterotetramer of two type I and two type II keratins. Heterodimer with KRT1. Two heterodimers of KRT1 and KRT10 form a heterotetramer. The KRT10 subunit in the heterotetramer is probably disulfide-linked.

It is found in the secreted. Its subcellular location is the extracellular space. The protein localises to the cell surface. It localises to the cytoplasm. Functionally, plays a role in the establishment of the epidermal barrier on plantar skin. Involved in the maintenance of cell layer development and keratin filament bundles in suprabasal cells of the epithelium. This chain is Keratin, type I cytoskeletal 10, found in Rattus norvegicus (Rat).